The sequence spans 283 residues: MLTNTERVKVLSDVTILQKFSSRIIVIKYGGAAMKNQKLKDHVISDLVFLSFIGLRPILVHGGGPEINFWLDQLKILPKFENGVRVTDQPTMDIVEMVLVGRVNKDLVASINKQGGKSVGLSGKDGLLITSRPSDKPNLGFVGEVQNVDTNLLEILINNNYIPVIASVAADKQGQSYNINADTVAGEIAARLNAEKLILLTDTPGILRNASDATTLISHLSIQEARDLTKTAVISGGMIPKVNCCIRSLAQGVASAHILDGRIDHALLLEILTDQGIGSMLVV.

Substrate-binding positions include 63-64, Arg85, and Asn178; that span reads GG.

Belongs to the acetylglutamate kinase family. ArgB subfamily.

The protein localises to the plastid. The protein resides in the chloroplast. The catalysed reaction is N-acetyl-L-glutamate + ATP = N-acetyl-L-glutamyl 5-phosphate + ADP. It functions in the pathway amino-acid biosynthesis; L-arginine biosynthesis; N(2)-acetyl-L-ornithine from L-glutamate: step 2/4. In terms of biological role, catalyzes the ATP-dependent phosphorylation of N-acetyl-L-glutamate. In Porphyra purpurea (Red seaweed), this protein is Acetylglutamate kinase.